Here is a 310-residue protein sequence, read N- to C-terminus: Aspartate carbamoyltransferase catalytic subunit (310 aa).

The carbamoyl phosphate site is built by Arg55 and Thr56. Lys83 lines the L-aspartate pocket. Residues Arg105, His133, and Gln136 each contribute to the carbamoyl phosphate site. L-aspartate contacts are provided by Arg166 and Arg220. 2 residues coordinate carbamoyl phosphate: Gly261 and Pro262.

This sequence belongs to the aspartate/ornithine carbamoyltransferase superfamily. ATCase family. As to quaternary structure, heterododecamer (2C3:3R2) of six catalytic PyrB chains organized as two trimers (C3), and six regulatory PyrI chains organized as three dimers (R2).

It carries out the reaction carbamoyl phosphate + L-aspartate = N-carbamoyl-L-aspartate + phosphate + H(+). The protein operates within pyrimidine metabolism; UMP biosynthesis via de novo pathway; (S)-dihydroorotate from bicarbonate: step 2/3. Its function is as follows. Catalyzes the condensation of carbamoyl phosphate and aspartate to form carbamoyl aspartate and inorganic phosphate, the committed step in the de novo pyrimidine nucleotide biosynthesis pathway. This Chlorobium phaeovibrioides (strain DSM 265 / 1930) (Prosthecochloris vibrioformis (strain DSM 265)) protein is Aspartate carbamoyltransferase catalytic subunit.